We begin with the raw amino-acid sequence, 178 residues long: ATP synthase subunit delta (178 aa).

This sequence belongs to the ATPase delta chain family. F-type ATPases have 2 components, F(1) - the catalytic core - and F(0) - the membrane proton channel. F(1) has five subunits: alpha(3), beta(3), gamma(1), delta(1), epsilon(1). F(0) has three main subunits: a(1), b(2) and c(10-14). The alpha and beta chains form an alternating ring which encloses part of the gamma chain. F(1) is attached to F(0) by a central stalk formed by the gamma and epsilon chains, while a peripheral stalk is formed by the delta and b chains.

It is found in the cell membrane. F(1)F(0) ATP synthase produces ATP from ADP in the presence of a proton or sodium gradient. F-type ATPases consist of two structural domains, F(1) containing the extramembraneous catalytic core and F(0) containing the membrane proton channel, linked together by a central stalk and a peripheral stalk. During catalysis, ATP synthesis in the catalytic domain of F(1) is coupled via a rotary mechanism of the central stalk subunits to proton translocation. Functionally, this protein is part of the stalk that links CF(0) to CF(1). It either transmits conformational changes from CF(0) to CF(1) or is implicated in proton conduction. This chain is ATP synthase subunit delta, found in Streptococcus pyogenes serotype M6 (strain ATCC BAA-946 / MGAS10394).